We begin with the raw amino-acid sequence, 330 residues long: DNA-directed RNA polymerase subunit alpha (330 aa).

An alpha N-terminal domain (alpha-NTD) region spans residues M1–R236. The segment at F250–D330 is alpha C-terminal domain (alpha-CTD).

It belongs to the RNA polymerase alpha chain family. As to quaternary structure, homodimer. The RNAP catalytic core consists of 2 alpha, 1 beta, 1 beta' and 1 omega subunit. When a sigma factor is associated with the core the holoenzyme is formed, which can initiate transcription.

The catalysed reaction is RNA(n) + a ribonucleoside 5'-triphosphate = RNA(n+1) + diphosphate. DNA-dependent RNA polymerase catalyzes the transcription of DNA into RNA using the four ribonucleoside triphosphates as substrates. In Vibrio vulnificus (strain CMCP6), this protein is DNA-directed RNA polymerase subunit alpha.